A 177-amino-acid polypeptide reads, in one-letter code: Large ribosomal subunit protein uL6 (177 aa).

This sequence belongs to the universal ribosomal protein uL6 family. In terms of assembly, part of the 50S ribosomal subunit.

Its function is as follows. This protein binds to the 23S rRNA, and is important in its secondary structure. It is located near the subunit interface in the base of the L7/L12 stalk, and near the tRNA binding site of the peptidyltransferase center. The protein is Large ribosomal subunit protein uL6 of Vibrio campbellii (strain ATCC BAA-1116).